Here is an 874-residue protein sequence, read N- to C-terminus: Alanine--tRNA ligase (874 aa).

The Zn(2+) site is built by His565, His569, Cys666, and His670.

The protein belongs to the class-II aminoacyl-tRNA synthetase family. It depends on Zn(2+) as a cofactor.

It is found in the cytoplasm. It carries out the reaction tRNA(Ala) + L-alanine + ATP = L-alanyl-tRNA(Ala) + AMP + diphosphate. Functionally, catalyzes the attachment of alanine to tRNA(Ala) in a two-step reaction: alanine is first activated by ATP to form Ala-AMP and then transferred to the acceptor end of tRNA(Ala). Also edits incorrectly charged Ser-tRNA(Ala) and Gly-tRNA(Ala) via its editing domain. The polypeptide is Alanine--tRNA ligase (Polynucleobacter asymbioticus (strain DSM 18221 / CIP 109841 / QLW-P1DMWA-1) (Polynucleobacter necessarius subsp. asymbioticus)).